A 429-amino-acid chain; its full sequence is Mannose-6-phosphate isomerase (429 aa).

S2 is subject to N-acetylserine. Position 107 is a phosphoserine (S107). 4 residues coordinate Zn(2+): Q109, H111, E136, and H281. R300 is an active-site residue.

The protein belongs to the mannose-6-phosphate isomerase type 1 family. Monomer. Requires Zn(2+) as cofactor.

Its subcellular location is the cytoplasm. The catalysed reaction is D-mannose 6-phosphate = D-fructose 6-phosphate. The protein operates within nucleotide-sugar biosynthesis; GDP-alpha-D-mannose biosynthesis; alpha-D-mannose 1-phosphate from D-fructose 6-phosphate: step 1/2. Its activity is regulated as follows. Can be inhibited by an excess of zinc. Functionally, involved in the synthesis of the GDP-mannose and dolichol-phosphate-mannose required for a number of critical mannosyl transfer reactions. The chain is Mannose-6-phosphate isomerase (PMI40) from Saccharomyces cerevisiae (strain ATCC 204508 / S288c) (Baker's yeast).